A 331-amino-acid polypeptide reads, in one-letter code: Centriolar satellite-associated tubulin polyglutamylase complex regulator 1 (331 aa).

Positions 283 to 331 (PTSNNNSSSSALGQKEMSKKASPRKSLHQRKRIEMESDGSTEETDSSEN) are disordered. Basic residues predominate over residues 303 to 313 (ASPRKSLHQRK). A compositionally biased stretch (acidic residues) spans 318 to 331 (ESDGSTEETDSSEN).

The protein belongs to the CSTPP1 family. In terms of assembly, interacts with PCM1. Interacts with the complex TPGC. Binds to alpha-tubulin. In terms of tissue distribution, expression in elevated in ciliated tissues/organs, including brain, spinal cord, kidney, eyes, ears and lateral line.

The protein resides in the cytoplasm. The protein localises to the cytoskeleton. It localises to the microtubule organizing center. It is found in the centrosome. Its subcellular location is the centriolar satellite. Its function is as follows. Regulator of the tubulin polyglutamylase complex (TPGC) that controls cytoskeletal organization, nuclear shape, and cilium disassembly by balancing microtubule and actin assembly. Regulates the assembly and stability of the TPGC and thereby modulates polyglutamylation of the microtubule, which antagonizes MAP4 binding. The chain is Centriolar satellite-associated tubulin polyglutamylase complex regulator 1 (cstpp1) from Danio rerio (Zebrafish).